A 361-amino-acid chain; its full sequence is Peptide chain release factor 1 (361 aa).

Q235 is subject to N5-methylglutamine.

It belongs to the prokaryotic/mitochondrial release factor family. Methylated by PrmC. Methylation increases the termination efficiency of RF1.

The protein resides in the cytoplasm. In terms of biological role, peptide chain release factor 1 directs the termination of translation in response to the peptide chain termination codons UAG and UAA. The polypeptide is Peptide chain release factor 1 (Chlamydia felis (strain Fe/C-56) (Chlamydophila felis)).